A 207-amino-acid polypeptide reads, in one-letter code: Uracil phosphoribosyltransferase (207 aa).

5-phospho-alpha-D-ribose 1-diphosphate-binding positions include Arg-77, Arg-102, and 129-137 (DPMLATGGS). Residues Ile-192 and 197-199 (GDA) contribute to the uracil site. Asp-198 contributes to the 5-phospho-alpha-D-ribose 1-diphosphate binding site.

It belongs to the UPRTase family. Mg(2+) is required as a cofactor.

The enzyme catalyses UMP + diphosphate = 5-phospho-alpha-D-ribose 1-diphosphate + uracil. It participates in pyrimidine metabolism; UMP biosynthesis via salvage pathway; UMP from uracil: step 1/1. Its activity is regulated as follows. Allosterically activated by GTP. Catalyzes the conversion of uracil and 5-phospho-alpha-D-ribose 1-diphosphate (PRPP) to UMP and diphosphate. This chain is Uracil phosphoribosyltransferase, found in Ureaplasma parvum serovar 3 (strain ATCC 27815 / 27 / NCTC 11736).